We begin with the raw amino-acid sequence, 291 residues long: G1/S-specific cyclin-D1 (291 aa).

Thr282 carries the phosphothreonine modification.

The protein belongs to the cyclin family. Cyclin D subfamily. As to quaternary structure, interacts with the cdk4 and cdk6 protein kinases to form a serine/threonine kinase holoenzyme complex. The cyclin subunit imparts substrate specificity to the complex. In terms of processing, phosphorylation at Thr-282 by MAP kinases is required for ubiquitination and degradation by the DCX(AMBRA1) complex. Post-translationally, ubiquitinated by the DCX(AMBRA1) complex during the transition from G1 to S cell phase, leading to its degradation. The DCX(AMBRA1) complex represents the major regulator of CCND1 stability during the G1/S transition.

The protein localises to the nucleus. It localises to the cytoplasm. Regulatory component of the cyclin D1-CDK4 (DC) complex that phosphorylates and inhibits members of the retinoblastoma (RB) protein family including RB1 and regulates the cell-cycle during G(1)/S transition. Phosphorylation of RB1 allows dissociation of the transcription factor E2F from the RB/E2F complex and the subsequent transcription of E2F target genes which are responsible for the progression through the G(1) phase. Hypophosphorylates RB1 in early G(1) phase. Cyclin D-CDK4 complexes are major integrators of various mitogenenic and antimitogenic signals. The sequence is that of G1/S-specific cyclin-D1 (ccnd1) from Xenopus laevis (African clawed frog).